Here is a 305-residue protein sequence, read N- to C-terminus: MQLGIILKGIGGFYYVKQEKTEDIFECKPRGVFRKNSVTPLPGDRVGFSIIDGDKKLGNIDEILPRSSELVRPAVANVDQIAIIVAAKAPNPDYMLLDKLLITAETRNIRVLICVNKIDLDDDTAKIVRNAYSPAGYDVIEISSVRNIGYKRLKEELKGHITVFAGQSGVGKSTILNHIMESWVMETGSVSNKIERGKHTTRHAELLELKYGGYVADTPGFSSFEIIDIPYNQLERYYPEFLPYINTCRFNSCSHITEPGCRVIEALERSEIDNNRYQRYIQLYKALKDIPQYKGKKTESRRVIK.

Residues S67–F224 enclose the CP-type G domain. GTP is bound by residues N116–D119 and G166–T174. C248, C253, H255, and C261 together coordinate Zn(2+).

The protein belongs to the TRAFAC class YlqF/YawG GTPase family. RsgA subfamily. Monomer. Associates with 30S ribosomal subunit, binds 16S rRNA. It depends on Zn(2+) as a cofactor.

It localises to the cytoplasm. Its function is as follows. One of several proteins that assist in the late maturation steps of the functional core of the 30S ribosomal subunit. Helps release RbfA from mature subunits. May play a role in the assembly of ribosomal proteins into the subunit. Circularly permuted GTPase that catalyzes slow GTP hydrolysis, GTPase activity is stimulated by the 30S ribosomal subunit. The protein is Small ribosomal subunit biogenesis GTPase RsgA of Ruminiclostridium cellulolyticum (strain ATCC 35319 / DSM 5812 / JCM 6584 / H10) (Clostridium cellulolyticum).